The chain runs to 248 residues: 1-(5-phosphoribosyl)-5-[(5-phosphoribosylamino)methylideneamino] imidazole-4-carboxamide isomerase (248 aa).

Aspartate 8 serves as the catalytic Proton acceptor. Aspartate 129 (proton donor) is an active-site residue.

This sequence belongs to the HisA/HisF family.

The protein localises to the cytoplasm. It catalyses the reaction 1-(5-phospho-beta-D-ribosyl)-5-[(5-phospho-beta-D-ribosylamino)methylideneamino]imidazole-4-carboxamide = 5-[(5-phospho-1-deoxy-D-ribulos-1-ylimino)methylamino]-1-(5-phospho-beta-D-ribosyl)imidazole-4-carboxamide. The protein operates within amino-acid biosynthesis; L-histidine biosynthesis; L-histidine from 5-phospho-alpha-D-ribose 1-diphosphate: step 4/9. This is 1-(5-phosphoribosyl)-5-[(5-phosphoribosylamino)methylideneamino] imidazole-4-carboxamide isomerase from Rhizobium johnstonii (strain DSM 114642 / LMG 32736 / 3841) (Rhizobium leguminosarum bv. viciae).